The following is a 195-amino-acid chain: ATP-dependent Clp protease proteolytic subunit (195 aa).

S98 functions as the Nucleophile in the catalytic mechanism. H123 is a catalytic residue.

The protein belongs to the peptidase S14 family. Fourteen ClpP subunits assemble into 2 heptameric rings which stack back to back to give a disk-like structure with a central cavity, resembling the structure of eukaryotic proteasomes.

It is found in the cytoplasm. It catalyses the reaction Hydrolysis of proteins to small peptides in the presence of ATP and magnesium. alpha-casein is the usual test substrate. In the absence of ATP, only oligopeptides shorter than five residues are hydrolyzed (such as succinyl-Leu-Tyr-|-NHMec, and Leu-Tyr-Leu-|-Tyr-Trp, in which cleavage of the -Tyr-|-Leu- and -Tyr-|-Trp bonds also occurs).. Its function is as follows. Cleaves peptides in various proteins in a process that requires ATP hydrolysis. Has a chymotrypsin-like activity. Plays a major role in the degradation of misfolded proteins. In Staphylococcus aureus (strain Mu3 / ATCC 700698), this protein is ATP-dependent Clp protease proteolytic subunit.